A 402-amino-acid chain; its full sequence is NADH-quinone oxidoreductase subunit D (402 aa).

It belongs to the complex I 49 kDa subunit family. NDH-1 is composed of 14 different subunits. Subunits NuoB, C, D, E, F, and G constitute the peripheral sector of the complex.

The protein localises to the cell inner membrane. The enzyme catalyses a quinone + NADH + 5 H(+)(in) = a quinol + NAD(+) + 4 H(+)(out). Functionally, NDH-1 shuttles electrons from NADH, via FMN and iron-sulfur (Fe-S) centers, to quinones in the respiratory chain. The immediate electron acceptor for the enzyme in this species is believed to be ubiquinone. Couples the redox reaction to proton translocation (for every two electrons transferred, four hydrogen ions are translocated across the cytoplasmic membrane), and thus conserves the redox energy in a proton gradient. In Maricaulis maris (strain MCS10) (Caulobacter maris), this protein is NADH-quinone oxidoreductase subunit D.